We begin with the raw amino-acid sequence, 103 residues long: MAHDHNHDHEHEERELITLVDEQGNETLFEILLTIDGMEEFGKNYVLLVPANAEEDENGEVEIQAYSFTENEDGTEGDLQPIPEDAEEEWNMIEEVFNSFMEE.

The protein belongs to the UPF0473 family.

In Streptococcus gordonii (strain Challis / ATCC 35105 / BCRC 15272 / CH1 / DL1 / V288), this protein is UPF0473 protein SGO_2040.